The primary structure comprises 511 residues: Glucans biosynthesis protein G (511 aa).

Positions 1–22 are cleaved as a signal peptide; the sequence is MMKMRWLSAAVMLTLYTSSSWA.

This sequence belongs to the OpgD/OpgG family.

The protein resides in the periplasm. It participates in glycan metabolism; osmoregulated periplasmic glucan (OPG) biosynthesis. In terms of biological role, involved in the biosynthesis of osmoregulated periplasmic glucans (OPGs). This Escherichia fergusonii (strain ATCC 35469 / DSM 13698 / CCUG 18766 / IAM 14443 / JCM 21226 / LMG 7866 / NBRC 102419 / NCTC 12128 / CDC 0568-73) protein is Glucans biosynthesis protein G.